Here is a 488-residue protein sequence, read N- to C-terminus: Protein nucleotidyltransferase YdiU (488 aa).

Residues G91, G93, R94, K114, D126, G127, R177, and R184 each coordinate ATP. The active-site Proton acceptor is the D253. Residues N254 and D263 each contribute to the Mg(2+) site. ATP is bound at residue D263.

The protein belongs to the SELO family. The cofactor is Mg(2+). It depends on Mn(2+) as a cofactor.

It catalyses the reaction L-seryl-[protein] + ATP = 3-O-(5'-adenylyl)-L-seryl-[protein] + diphosphate. The enzyme catalyses L-threonyl-[protein] + ATP = 3-O-(5'-adenylyl)-L-threonyl-[protein] + diphosphate. It carries out the reaction L-tyrosyl-[protein] + ATP = O-(5'-adenylyl)-L-tyrosyl-[protein] + diphosphate. The catalysed reaction is L-histidyl-[protein] + UTP = N(tele)-(5'-uridylyl)-L-histidyl-[protein] + diphosphate. It catalyses the reaction L-seryl-[protein] + UTP = O-(5'-uridylyl)-L-seryl-[protein] + diphosphate. The enzyme catalyses L-tyrosyl-[protein] + UTP = O-(5'-uridylyl)-L-tyrosyl-[protein] + diphosphate. Functionally, nucleotidyltransferase involved in the post-translational modification of proteins. It can catalyze the addition of adenosine monophosphate (AMP) or uridine monophosphate (UMP) to a protein, resulting in modifications known as AMPylation and UMPylation. In Bacillus cereus (strain G9842), this protein is Protein nucleotidyltransferase YdiU.